A 398-amino-acid chain; its full sequence is Small ribosomal subunit protein uS3m (398 aa).

The protein belongs to the universal ribosomal protein uS3 family. In terms of assembly, component of the mitochondrial small ribosomal subunit (mt-SSU). Mature yeast 74S mitochondrial ribosomes consist of a small (37S) and a large (54S) subunit. The 37S small subunit contains a 15S ribosomal RNA (15S mt-rRNA) and 34 different proteins. The 54S large subunit contains a 21S rRNA (21S mt-rRNA) and 46 different proteins. uS3m, uS4m and uS5m form the narrow entry site of the mRNA channel.

The protein localises to the mitochondrion. Component of the mitochondrial ribosome (mitoribosome), a dedicated translation machinery responsible for the synthesis of mitochondrial genome-encoded proteins, including at least some of the essential transmembrane subunits of the mitochondrial respiratory chain. The mitoribosomes are attached to the mitochondrial inner membrane and translation products are cotranslationally integrated into the membrane. uS3m is essential for mitochondrial protein synthesis and required for the maturation of small ribosomal subunits. The protein is Small ribosomal subunit protein uS3m (VAR1) of Saccharomyces cerevisiae (strain ATCC 204508 / S288c) (Baker's yeast).